The chain runs to 512 residues: Ribose import ATP-binding protein RbsA (512 aa).

ABC transporter domains lie at 6 to 242 (LELR…VNRE) and 252 to 496 (VPAG…TGAQ). 38–45 (GENGAGKS) contributes to the ATP binding site.

This sequence belongs to the ABC transporter superfamily. Ribose importer (TC 3.A.1.2.1) family. The complex is composed of an ATP-binding protein (RbsA), two transmembrane proteins (RbsC) and a solute-binding protein (RbsB).

The protein localises to the cell inner membrane. The enzyme catalyses D-ribose(out) + ATP + H2O = D-ribose(in) + ADP + phosphate + H(+). Its function is as follows. Part of the ABC transporter complex RbsABC involved in ribose import. Responsible for energy coupling to the transport system. The protein is Ribose import ATP-binding protein RbsA of Pseudomonas putida (strain ATCC 47054 / DSM 6125 / CFBP 8728 / NCIMB 11950 / KT2440).